A 701-amino-acid chain; its full sequence is A-type ATP synthase subunit I (701 aa).

The next 10 helical transmembrane spans lie at tryptophan 340–phenylalanine 360, phenylalanine 363–tyrosine 379, isoleucine 388–leucine 408, leucine 435–phenylalanine 455, methionine 468–isoleucine 488, phenylalanine 498–methionine 518, glycine 555–valine 575, tryptophan 583–leucine 603, valine 612–leucine 632, and isoleucine 649–isoleucine 669.

It belongs to the V-ATPase 116 kDa subunit family. Has multiple subunits with at least A(3), B(3), C, D, E, F, H, I and proteolipid K(x).

The protein resides in the cell membrane. Component of the A-type ATP synthase that produces ATP from ADP in the presence of a proton gradient across the membrane. The polypeptide is A-type ATP synthase subunit I (Saccharolobus solfataricus (strain ATCC 35092 / DSM 1617 / JCM 11322 / P2) (Sulfolobus solfataricus)).